Reading from the N-terminus, the 188-residue chain is uncharacterized protein (188 aa).

A signal peptide spans 1-18 (MTLRIIAHLLALTASLAG). Cys19 carries N-palmitoyl cysteine lipidation. Cys19 carries S-diacylglycerol cysteine lipidation.

It localises to the cell membrane. This is an uncharacterized protein from Sinorhizobium fredii (strain NBRC 101917 / NGR234).